The sequence spans 101 residues: Large ribosomal subunit protein bL28 (101 aa).

Belongs to the bacterial ribosomal protein bL28 family.

This Rhodopseudomonas palustris (strain BisB5) protein is Large ribosomal subunit protein bL28.